The following is a 458-amino-acid chain: ATP synthase subunit beta (458 aa).

Position 148 to 155 (148 to 155) interacts with ATP; sequence GGAGVGKT.

It belongs to the ATPase alpha/beta chains family. F-type ATPases have 2 components, CF(1) - the catalytic core - and CF(0) - the membrane proton channel. CF(1) has five subunits: alpha(3), beta(3), gamma(1), delta(1), epsilon(1). CF(0) has three main subunits: a(1), b(2) and c(9-12). The alpha and beta chains form an alternating ring which encloses part of the gamma chain. CF(1) is attached to CF(0) by a central stalk formed by the gamma and epsilon chains, while a peripheral stalk is formed by the delta and b chains.

It is found in the cell inner membrane. The catalysed reaction is ATP + H2O + 4 H(+)(in) = ADP + phosphate + 5 H(+)(out). Produces ATP from ADP in the presence of a proton gradient across the membrane. The catalytic sites are hosted primarily by the beta subunits. This is ATP synthase subunit beta from Pseudomonas aeruginosa (strain LESB58).